The primary structure comprises 316 residues: Thymidylate synthase (316 aa).

DUMP is bound by residues Arg-23 and Arg-178–Arg-179. Cys-198 functions as the Nucleophile in the catalytic mechanism. Residues Arg-218–Asp-221, Asn-229, and His-259–Tyr-261 contribute to the dUMP site. Asp-221 contacts (6R)-5,10-methylene-5,6,7,8-tetrahydrofolate. Residue Ala-315 participates in (6R)-5,10-methylene-5,6,7,8-tetrahydrofolate binding.

This sequence belongs to the thymidylate synthase family. Bacterial-type ThyA subfamily. As to quaternary structure, homodimer.

The protein resides in the cytoplasm. It carries out the reaction dUMP + (6R)-5,10-methylene-5,6,7,8-tetrahydrofolate = 7,8-dihydrofolate + dTMP. The protein operates within pyrimidine metabolism; dTTP biosynthesis. Functionally, catalyzes the reductive methylation of 2'-deoxyuridine-5'-monophosphate (dUMP) to 2'-deoxythymidine-5'-monophosphate (dTMP) while utilizing 5,10-methylenetetrahydrofolate (mTHF) as the methyl donor and reductant in the reaction, yielding dihydrofolate (DHF) as a by-product. This enzymatic reaction provides an intracellular de novo source of dTMP, an essential precursor for DNA biosynthesis. This chain is Thymidylate synthase, found in Lacticaseibacillus casei (Lactobacillus casei).